Reading from the N-terminus, the 336-residue chain is Glyoxylate reductase (336 aa).

Residues 158 to 161 (FGRI), 180 to 182 (SRT), and 239 to 241 (IAR) each bind NADP(+). Active-site residues include Arg241 and Glu270. Residue His288 is the Proton donor of the active site. Residue 288 to 290 (HIG) participates in NADP(+) binding.

Belongs to the D-isomer specific 2-hydroxyacid dehydrogenase family. GyaR subfamily. As to quaternary structure, homodimer.

The protein localises to the cytoplasm. It carries out the reaction glycolate + NAD(+) = glyoxylate + NADH + H(+). This chain is Glyoxylate reductase, found in Pyrococcus furiosus (strain ATCC 43587 / DSM 3638 / JCM 8422 / Vc1).